The primary structure comprises 286 residues: 4-diphosphocytidyl-2-C-methyl-D-erythritol kinase (286 aa).

Lys-11 is a catalytic residue. Residue 93 to 103 (PFGAGLGGGSS) coordinates ATP. Asp-135 is an active-site residue.

Belongs to the GHMP kinase family. IspE subfamily.

It catalyses the reaction 4-CDP-2-C-methyl-D-erythritol + ATP = 4-CDP-2-C-methyl-D-erythritol 2-phosphate + ADP + H(+). Its pathway is isoprenoid biosynthesis; isopentenyl diphosphate biosynthesis via DXP pathway; isopentenyl diphosphate from 1-deoxy-D-xylulose 5-phosphate: step 3/6. Functionally, catalyzes the phosphorylation of the position 2 hydroxy group of 4-diphosphocytidyl-2C-methyl-D-erythritol. The chain is 4-diphosphocytidyl-2-C-methyl-D-erythritol kinase from Chlorobaculum tepidum (strain ATCC 49652 / DSM 12025 / NBRC 103806 / TLS) (Chlorobium tepidum).